Consider the following 67-residue polypeptide: UPF0519 protein C (67 aa).

Residues 18 to 37 (KSQANLNSNSTNSPNNVQGL) are disordered. Residues 22-33 (NLNSNSTNSPNN) are compositionally biased toward low complexity.

The protein belongs to the UPF0519 family.

This Dictyostelium discoideum (Social amoeba) protein is UPF0519 protein C.